We begin with the raw amino-acid sequence, 87 residues long: Protein moa-2 (87 aa).

Residues 23 to 87 (GTAMRHEPSR…VWTASREESS (65 aa)) are disordered. Composition is skewed to basic and acidic residues over residues 26 to 39 (MRHE…ESAP) and 50 to 63 (RNEH…EREP).

The polypeptide is Protein moa-2 (Caenorhabditis elegans).